A 214-amino-acid polypeptide reads, in one-letter code: uncharacterized protein (214 aa).

Residues 1–24 form the signal peptide; that stretch reads MVTPHGILLLTITAAASLLWITFA. Residues 99–121 are disordered; that stretch reads APNDTQEQNSTRNKRDSESYTAT. A compositionally biased stretch (polar residues) spans 100–109; it reads PNDTQEQNST.

In terms of tissue distribution, component of the acid-insoluble and acid-soluble organic matrix of the aragonitic skeleton (at protein level).

Its subcellular location is the secreted. This is an uncharacterized protein from Acropora millepora (Staghorn coral).